The primary structure comprises 343 residues: Ribosomal RNA small subunit methyltransferase C (343 aa).

This sequence belongs to the methyltransferase superfamily. RsmC family. Monomer.

Its subcellular location is the cytoplasm. It carries out the reaction guanosine(1207) in 16S rRNA + S-adenosyl-L-methionine = N(2)-methylguanosine(1207) in 16S rRNA + S-adenosyl-L-homocysteine + H(+). Functionally, specifically methylates the guanine in position 1207 of 16S rRNA in the 30S particle. This Shigella sonnei (strain Ss046) protein is Ribosomal RNA small subunit methyltransferase C.